We begin with the raw amino-acid sequence, 105 residues long: MLHWISLLCAGCLEMAGVALMNQYAKEKSVKWVLLIIVGFAASFSLLSYAMETTPMGTAYAVWTGIGTAGGALIGILFYKEQKDAKRIFFIALILCSAVGLKILS.

4 helical membrane-spanning segments follow: residues 1-21 (MLHWISLLCAGCLEMAGVALM), 32-52 (WVLLIIVGFAASFSLLSYAME), 59-79 (AYAVWTGIGTAGGALIGILFY), and 85-105 (AKRIFFIALILCSAVGLKILS).

It belongs to the drug/metabolite transporter (DMT) superfamily. Small multidrug resistance (SMR) (TC 2.A.7.1) family. YkkC/YkkD subfamily. The efflux pump is composed of GdnC and GdnD.

It localises to the cell membrane. In terms of biological role, probably involved in guanidinium transport. In vitro, confers resistance to a broad range of toxic compounds such as cationic dyes, neutral and anionic antimicrobials. The chain is Probable guanidinium efflux system subunit GdnD from Bacillus subtilis (strain 168).